The chain runs to 650 residues: Protein KINESIN LIGHT CHAIN-RELATED 3 (650 aa).

Positions 104–141 (EKQTGKKNVTKSNVGVGGMRKKKVGGTKLQNGNEEPSS) are disordered. The span at 131 to 141 (KLQNGNEEPSS) shows a compositional bias: polar residues. TPR repeat units follow at residues 192-225 (IMCL…PVVE), 235-268 (FAGL…QKKV), 277-310 (GETC…HRES), 319-353 (AADR…AANG), 359-392 (AFVD…LKTA), 401-434 (GSVY…YESH), 444-477 (ASGL…YADS), 485-518 (AGIE…LRAT), 527-560 (GIAL…LEQE), and 569-602 (LGLY…REEK).

Belongs to the kinesin light chain family.

In Arabidopsis thaliana (Mouse-ear cress), this protein is Protein KINESIN LIGHT CHAIN-RELATED 3.